A 520-amino-acid chain; its full sequence is Probable protein phosphatase 2C 39 (520 aa).

Positions 160-507 (FLTSTEIKMA…DDVTIIVIIL (348 aa)) constitute a PPM-type phosphatase domain. The Mn(2+) site is built by Asp-195, Gly-196, Asp-435, and Asp-498.

Belongs to the PP2C family. Mg(2+) serves as cofactor. Mn(2+) is required as a cofactor.

It catalyses the reaction O-phospho-L-seryl-[protein] + H2O = L-seryl-[protein] + phosphate. It carries out the reaction O-phospho-L-threonyl-[protein] + H2O = L-threonyl-[protein] + phosphate. This is Probable protein phosphatase 2C 39 from Oryza sativa subsp. japonica (Rice).